The primary structure comprises 267 residues: Chlorophyll a-b binding protein 3A, chloroplastic (267 aa).

A chloroplast-targeting transit peptide spans 1-34 (MAASTMALSSSTFAGKTVKLAPSSSEITGNGRIT). The chain crosses the membrane as a helical span at residues 153–173 (LVHAQSILAIWACQVVLMGAV). Positions 154, 158, 166, 174, 177, and 183 each coordinate chlorophyll b. 7 residues coordinate chlorophyll a: K214, E215, N218, R220, Q232, H247, and A256. Residues 221–241 (LAMFSMFGFFVQAIVTGKGPL) traverse the membrane as a helical segment. Position 263 (F263) interacts with chlorophyll b.

The protein belongs to the light-harvesting chlorophyll a/b-binding (LHC) protein family. The LHC complex consists of chlorophyll a-b binding proteins. Binds at least 14 chlorophylls (8 Chl-a and 6 Chl-b) and carotenoids such as lutein and neoxanthin. serves as cofactor. In terms of processing, photoregulated by reversible phosphorylation of its threonine residues.

It localises to the plastid. The protein localises to the chloroplast thylakoid membrane. Functionally, the light-harvesting complex (LHC) functions as a light receptor, it captures and delivers excitation energy to photosystems with which it is closely associated. The protein is Chlorophyll a-b binding protein 3A, chloroplastic (CAB3A) of Solanum lycopersicum (Tomato).